The following is a 148-amino-acid chain: KLKASDSRSFLDPMPEGVPLSELELDKDEKFSTMEEERRKLIAEDREGNATRIAELEVAMNEHSHELAKLKASDSRSFLDPMPEGVPLSELELDKDEKFSTMEEERRKLIAEDREGNAARIAELEVAMNEHSHELAKLKASDSRSFQS.

Positions 1-22 (KLKASDSRSFLDPMPEGVPLSE) are disordered. 2 consecutive repeat copies span residues 1-68 (KLKA…HELA) and 69-136 (KLKA…HELA). A 3; truncated repeat occupies 137-148 (KLKASDSRSFQS).

The protein localises to the cytoplasm. Its subcellular location is the cytoskeleton. This chain is Antigen GM6 (GM6), found in Trypanosoma brucei gambiense.